The sequence spans 230 residues: GGGGGNVSGSYREAGGNMQPGAYGSYNYTGMDLSISRTAAPTYGGDNSFPGQESSRFRANQNCPLSTPDPLPCAKSQKSELSPADPATSSAHFTETEETSASSETDESTPRSGAPPRALQDNCSPGAAGTDGQSPQIFPWMRKLHINHDMAGPDGKRARTAYTRYQTLELEKEFHFNRYLTRRRRIEIAHTLCLSERQIKIWFQNRRMKWKKDNKLKSMSLATGSSAFQP.

The segment at 1 to 135 (GGGGGNVSGS…GAAGTDGQSP (135 aa)) is disordered. Positions 49–65 (FPGQESSRFRANQNCPL) are enriched in polar residues. The span at 87–103 (ATSSAHFTETEETSASS) shows a compositional bias: low complexity. The Antp-type hexapeptide motif lies at 137 to 142 (IFPWMR). Residues 155-214 (GKRARTAYTRYQTLELEKEFHFNRYLTRRRRIEIAHTLCLSERQIKIWFQNRRMKWKKDN) constitute a DNA-binding region (homeobox).

Belongs to the Antp homeobox family.

It localises to the nucleus. Sequence-specific transcription factor which is part of a developmental regulatory system that provides cells with specific positional identities on the anterior-posterior axis. This Xenopus laevis (African clawed frog) protein is Homeobox protein Hox-B5 (hoxb5).